The primary structure comprises 104 residues: Turripeptide OL55-like (104 aa).

Contains 8 disulfide bonds. As to expression, expressed by the venom duct.

It is found in the secreted. Acts as a neurotoxin by inhibiting an ion channel. The sequence is that of Turripeptide OL55-like from Iotyrris cingulifera (Sea snail).